An 868-amino-acid chain; its full sequence is Monofunctional pimaradiene synthase (868 aa).

Mg(2+) is bound by residues Asp620, Asp624, Asn764, Thr768, and Glu772.

This sequence belongs to the terpene synthase family. Tpsd subfamily. The cofactor is Mg(2+).

The enzyme catalyses (+)-copalyl diphosphate = (-)-pimara-8(14),15-diene + diphosphate. It participates in terpene metabolism; oleoresin biosynthesis. In terms of biological role, involved in defensive oleoresin formation in conifers in response to insect attack or other injury. Involved in diterpene (C20) olefins biosynthesis. Monofunctional enzyme lacking the DXDD motif in the class II active site relevant for the cyclization of geranylgeranyl diphosphate (GGPP). Requires (+)-copalyl diphosphate ((+)-CPP) as substrate, but no activity with GGPP or ent-CPP. Pimaradiene is the major products of the enzyme. The polypeptide is Monofunctional pimaradiene synthase (Pinus banksiana (Jack pine)).